The primary structure comprises 51 residues: DNA-directed RNA polymerase subunit Rpo12 (51 aa).

3 residues coordinate Zn(2+): Cys14, Cys29, and Cys32.

The protein belongs to the archaeal Rpo12/eukaryotic RPC10 RNA polymerase subunit family. Part of the RNA polymerase complex. Zn(2+) serves as cofactor.

It localises to the cytoplasm. It carries out the reaction RNA(n) + a ribonucleoside 5'-triphosphate = RNA(n+1) + diphosphate. Functionally, DNA-dependent RNA polymerase (RNAP) catalyzes the transcription of DNA into RNA using the four ribonucleoside triphosphates as substrates. The protein is DNA-directed RNA polymerase subunit Rpo12 of Methanopyrus kandleri (strain AV19 / DSM 6324 / JCM 9639 / NBRC 100938).